Consider the following 756-residue polypeptide: LIM domain and actin-binding protein 1 (756 aa).

An N-acetylmethionine modification is found at M1. Phosphoserine is present on residues S15 and S55. Positions 44–56 (AAEEANMEKRRSN) are enriched in basic and acidic residues. Disordered stretches follow at residues 44-183 (AAEE…SNKI) and 204-377 (QTKI…AVKK). Low complexity predominate over residues 107-118 (EVASSSASGVEA). S130 carries the phosphoserine modification. Residues 140–173 (RIKDTEHLKDHSAESKKMENCLAESRHEVGKPET) show a composition bias toward basic and acidic residues. The Required for interaction with NPC1L1 signature appears at 164 to 166 (SRH). S221 carries the post-translational modification Phosphoserine. At Y225 the chain carries Phosphotyrosine. Phosphoserine is present on residues S226 and S238. Positions 245-254 (EKSESRRNLE) are enriched in basic and acidic residues. S259 is modified (phosphoserine). Residues 274 to 287 (VSKQSSSTNYTNEL) are compositionally biased toward polar residues. A compositionally biased stretch (basic and acidic residues) spans 294–303 (IKTHKLEQKE). A phosphoserine mark is found at S339, S346, S358, S365, and S370. Residues 384–444 (ETCVECQKTV…KPHFNQLFKS (61 aa)) enclose the LIM zinc-binding domain. N6-succinyllysine is present on K435. Position 486 is a phosphoserine (S486). Residues 489–509 (VEDAPIAKVGVLTASMEAKAS) form a required for interaction with MYO5B region. Residues 508–726 (ASSQLEKEDK…TTQKQKSQDV (219 aa)) are disordered. The segment covering 512 to 523 (LEKEDKPAETKK) has biased composition (basic and acidic residues). Residues 533–542 (ELSSSGSALE) are compositionally biased toward low complexity. The segment covering 552-563 (WPPEDEVSKPEA) has biased composition (basic and acidic residues). Phosphoserine occurs at positions 597, 600, 605, and 613. Basic and acidic residues predominate over residues 627–637 (AERKQMEKASA). Positions 638 to 651 (SEKNGSVGKTTWPS) are enriched in polar residues. Over residues 652 to 667 (KESRGGEAAGRSKEVQ) the composition is skewed to basic and acidic residues. The segment covering 691-721 (LQQQSPLEPKSKNWSSFADNTSAKEFTTQKQ) has biased composition (polar residues). A phosphoserine mark is found at S695, S723, and S738.

In terms of assembly, interacts with NPC1L1; bridges NPC1L1 with MYO5B. Interacts with MYO5B; bridges MYO5B with NPC1L1. Interacts with PXN; this complex stabilizes actin dynamics. Interacts with F-actin and G-actin. Interacts with LUZP1 (via C-terminus); both proteins restrict ciliation and may work together to regulate this process. Binds RAB40B (GTP-bound); interaction influences LIMA1 subcellular localization in lamellipodia during cell migration. Post-translationally, phosphorylation of the C-terminal region by MAPK1/MAPK3 reduces its association with F-actin and contributes to actin filament reorganization and enhances cell motility. In terms of processing, ubiquitinated by the ECS(RAB40B) complex leading to its degradation. In terms of tissue distribution, widely expressed. Highest levels of isoform 2 are expressed in lung, spleen and small intestine. Isoform 2 is expressed at higher levels than isoform 1 in most tissues except liver, fat and kidney. Isoform 1 and isoform 2 are expressed at low levels in skeletal muscle, heart, stomach and lymph.

It localises to the cytoplasm. Its subcellular location is the cell junction. It is found in the focal adhesion. The protein resides in the cytoskeleton. The protein localises to the stress fiber. It localises to the cell membrane. Its subcellular location is the cell projection. It is found in the ruffle. The protein resides in the lamellipodium. In terms of biological role, actin-binding protein involved in actin cytoskeleton regulation and dynamics. Increases the number and size of actin stress fibers and inhibits membrane ruffling. Inhibits actin filament depolymerization. Bundles actin filaments, delays filament nucleation and reduces formation of branched filaments. Acts as a negative regulator of primary cilium formation. Plays a role in cholesterol homeostasis. Influences plasma cholesterol levels through regulation of intestinal cholesterol absorption. May act as a scaffold protein by regulating NPC1L1 transportation, an essential protein for cholesterol absorption, to the plasma membrane by recruiting MYO5B to NPC1L1, and thus facilitates cholesterol uptake. In Sus scrofa (Pig), this protein is LIM domain and actin-binding protein 1.